A 609-amino-acid polypeptide reads, in one-letter code: Glutamine--fructose-6-phosphate aminotransferase [isomerizing] (609 aa).

C2 (nucleophile; for GATase activity) is an active-site residue. A Glutamine amidotransferase type-2 domain is found at 2–217 (CGIVGYIGRR…EGWLAELTPE (216 aa)). SIS domains are found at residues 286–425 (SAAE…QNGR) and 458–599 (AAEA…VDKP). The For Fru-6P isomerization activity role is filled by K604.

In terms of assembly, homodimer.

The protein localises to the cytoplasm. The catalysed reaction is D-fructose 6-phosphate + L-glutamine = D-glucosamine 6-phosphate + L-glutamate. Catalyzes the first step in hexosamine metabolism, converting fructose-6P into glucosamine-6P using glutamine as a nitrogen source. This chain is Glutamine--fructose-6-phosphate aminotransferase [isomerizing], found in Symbiobacterium thermophilum (strain DSM 24528 / JCM 14929 / IAM 14863 / T).